A 515-amino-acid chain; its full sequence is FADH(2)-dependent monooxygenase TftD (515 aa).

100–104 contributes to the substrate binding site; it reads RLPDA. Residues 151 to 153, 157 to 160, and Thr192 contribute to the FAD site; these read LNF and QTDR. 203 to 204 is a substrate binding site; that stretch reads GC. 457 to 460 contacts FAD; the sequence is TMTR.

It belongs to the FADH(2)-utilizing monooxygenase family. Homotetramer. The chlorophenol-4-monooxygenase is composed of an oxygenase component TftD and a reductase component TftC.

Its pathway is xenobiotic degradation. Functionally, oxygenase component of a two-component system that degrades 2,4,5-trichlorophenol. Uses FADH(2) supplied by TftC to oxidize 2,4,5-trichlorophenol (2,4,5-TCP) to 2,5-dichloro-p-benzoquinone, which is chemically reduced to 2,5-dichloro-p-hydroquinone (2,5-DiCHQ). Then, TftD oxidizes the latter to 5-chloro-2-hydroxy-p-benzoquinone. The sequence is that of FADH(2)-dependent monooxygenase TftD (tftD) from Burkholderia cepacia (Pseudomonas cepacia).